The following is a 255-amino-acid chain: tRNA (guanine-N(7)-)-methyltransferase (255 aa).

The span at 1–11 shows a compositional bias: basic and acidic residues; that stretch reads MSISDNSRDQL. The tract at residues 1–25 is disordered; that stretch reads MSISDNSRDQLGELPAGRPLQSDFD. E83, E108, D135, and D158 together coordinate S-adenosyl-L-methionine. D158 is a catalytic residue. K162 contacts substrate. The interval 164 to 169 is interaction with RNA; it reads RHNKRR. Substrate is bound by residues D194 and 232 to 235; that span reads TKFE.

This sequence belongs to the class I-like SAM-binding methyltransferase superfamily. TrmB family.

The enzyme catalyses guanosine(46) in tRNA + S-adenosyl-L-methionine = N(7)-methylguanosine(46) in tRNA + S-adenosyl-L-homocysteine. The protein operates within tRNA modification; N(7)-methylguanine-tRNA biosynthesis. Its function is as follows. Catalyzes the formation of N(7)-methylguanine at position 46 (m7G46) in tRNA. This chain is tRNA (guanine-N(7)-)-methyltransferase, found in Corynebacterium glutamicum (strain ATCC 13032 / DSM 20300 / JCM 1318 / BCRC 11384 / CCUG 27702 / LMG 3730 / NBRC 12168 / NCIMB 10025 / NRRL B-2784 / 534).